A 389-amino-acid chain; its full sequence is Ethanolamine-phosphate cytidylyltransferase (389 aa).

Residues 221 to 222, 229 to 232, lysine 259, 307 to 310, and 336 to 340 contribute to the CTP site; these read AF, HVDF, HGKT, and SGNDL. Residues threonine 341 and threonine 342 each carry the phosphothreonine modification.

The protein belongs to the cytidylyltransferase family.

The enzyme catalyses phosphoethanolamine + CTP + H(+) = CDP-ethanolamine + diphosphate. Its pathway is phospholipid metabolism; phosphatidylethanolamine biosynthesis; phosphatidylethanolamine from ethanolamine: step 2/3. In terms of biological role, ethanolamine-phosphate cytidylyltransferase that catalyzes the second step in the synthesis of phosphatidylethanolamine (PE) from ethanolamine via the CDP-ethanolamine pathway. Phosphatidylethanolamine is a dominant inner-leaflet phospholipid in cell membranes, where it plays a role in membrane function by structurally stabilizing membrane-anchored proteins, and participates in important cellular processes such as cell division, cell fusion, blood coagulation, and apoptosis. This chain is Ethanolamine-phosphate cytidylyltransferase (PCYT2), found in Bos taurus (Bovine).